Consider the following 28-residue polypeptide: U-actitoxin-Ate1 (28 aa).

The first 15 residues, 1 to 15 (MSLILIFFAFTVLKS), serve as a signal peptide directing secretion. Cys-20 and Cys-26 are joined by a disulfide.

As to quaternary structure, monomer in solution. In terms of processing, may be N-glycosylated at Asn-22. Activity with this modification has not be tested. In terms of tissue distribution, highly expressed in the tentacles. Weakly expressed in acrorhagi and mesenteric filaments.

The protein localises to the secreted. The protein resides in the nematocyst. Functionally, probable toxin expected to be employed in prey capture and/or defense against predators (based on its abundance in tentacles). Has only a weak affinity for lipid membranes. Shows moderate cytotoxic activity against breast cancer cell lines (MCF-7 and MDA-MB-231). The protein is U-actitoxin-Ate1 of Actinia tenebrosa (Australian red waratah sea anemone).